An 868-amino-acid chain; its full sequence is Probable inorganic carbon transporter subunit DabA (868 aa).

Positions 392, 394, 574, and 589 each coordinate Zn(2+).

The protein belongs to the inorganic carbon transporter (TC 9.A.2) DabA family. In terms of assembly, forms a complex with DabB. The cofactor is Zn(2+).

Its subcellular location is the cell membrane. Its function is as follows. Part of an energy-coupled inorganic carbon pump. The protein is Probable inorganic carbon transporter subunit DabA of Bacillus cereus (strain B4264).